The primary structure comprises 86 residues: Small ribosomal subunit protein uS17 (86 aa).

The protein belongs to the universal ribosomal protein uS17 family. Part of the 30S ribosomal subunit.

Its function is as follows. One of the primary rRNA binding proteins, it binds specifically to the 5'-end of 16S ribosomal RNA. This is Small ribosomal subunit protein uS17 from Halorhodospira halophila (strain DSM 244 / SL1) (Ectothiorhodospira halophila (strain DSM 244 / SL1)).